Consider the following 744-residue polypeptide: Vesicle-fusing ATPase (744 aa).

At Lys105 the chain carries N6-acetyllysine. At Ser207 the chain carries Phosphoserine. Tyr259 is subject to Phosphotyrosine. ATP is bound by residues 505–510 and 545–552; these read NGIIKW and PHSGKTAL. Thr550 is a Mg(2+) binding site. Ser569 is modified (phosphoserine; by CDK16).

This sequence belongs to the AAA ATPase family. In terms of assembly, homohexamer. Interacts with GABARAP and GABARAPL2. Interacts with GRIA2. Interacts with PLK2, leading to disrupt the interaction with GRIA2. Interacts with MUSK; may regulate MUSK endocytosis and activity. Interacts with CDK16. Requires Mg(2+) as cofactor. In terms of processing, phosphorylation at Ser-569 interferes with homohexamerization.

The protein resides in the cytoplasm. It catalyses the reaction ATP + H2O = ADP + phosphate + H(+). Functionally, required for vesicle-mediated transport. Catalyzes the fusion of transport vesicles within the Golgi cisternae. Is also required for transport from the endoplasmic reticulum to the Golgi stack. Seems to function as a fusion protein required for the delivery of cargo proteins to all compartments of the Golgi stack GRIA2 leads to influence GRIA2 membrane cycling. In Mus musculus (Mouse), this protein is Vesicle-fusing ATPase (Nsf).